Here is a 416-residue protein sequence, read N- to C-terminus: Probable glucan 1,3-beta-glucosidase A (416 aa).

Residues M1–A21 form the signal peptide. E209 serves as the catalytic Proton donor. Disulfide bonds link C290/C415 and C316/C341. Catalysis depends on E308, which acts as the Nucleophile.

This sequence belongs to the glycosyl hydrolase 5 (cellulase A) family. In terms of assembly, monomer. Requires Mn(2+) as cofactor.

It is found in the secreted. It catalyses the reaction Successive hydrolysis of beta-D-glucose units from the non-reducing ends of (1-&gt;3)-beta-D-glucans, releasing alpha-glucose.. In terms of biological role, beta-glucanases participate in the metabolism of beta-glucan, the main structural component of the cell wall. It could also function biosynthetically as a transglycosylase. This is Probable glucan 1,3-beta-glucosidase A (exgA) from Aspergillus terreus (strain NIH 2624 / FGSC A1156).